A 287-amino-acid chain; its full sequence is Neugrin (287 aa).

The N-terminal stretch at 1 to 23 is a signal peptide; it reads MAFSPNVLLGGRVCAAVARSGFA. The tract at residues 149-169 is disordered; it reads SIPELPGPGDSSKPLSAGQSV. A glycan (N-linked (GlcNAc...) asparagine) is linked at asparagine 202.

It belongs to the neugrin family. In terms of assembly, forms a regulatory protein-RNA complex, consisting of RCC1L, NGRN, RPUSD3, RPUSD4, TRUB2, FASTKD2 and 16S mt-rRNA. Interacts with 16S mt-rRNA; this interaction is direct.

It is found in the nucleus. Its subcellular location is the secreted. The protein localises to the mitochondrion membrane. Plays an essential role in mitochondrial ribosome biogenesis. As a component of a functional protein-RNA module, consisting of RCC1L, NGRN, RPUSD3, RPUSD4, TRUB2, FASTKD2 and 16S mitochondrial ribosomal RNA (16S mt-rRNA), controls 16S mt-rRNA abundance and is required for intra-mitochondrial translation of core subunits of the oxidative phosphorylation system. The polypeptide is Neugrin (NGRN) (Bos taurus (Bovine)).